Consider the following 443-residue polypeptide: tRNA modification GTPase MnmE (443 aa).

Residues Arg-19, Glu-78, and Lys-118 each contribute to the (6S)-5-formyl-5,6,7,8-tetrahydrofolate site. The TrmE-type G domain occupies 214 to 366; the sequence is GFKIAIIGPT…LISKIKNKLK (153 aa). Asn-224 provides a ligand contact to K(+). Residues 224–229, 243–249, and 268–271 contribute to the GTP site; these read NAGKSS, SEIAGTT, and DTAG. Ser-228 serves as a coordination point for Mg(2+). Residues Ser-243, Ile-245, and Thr-248 each contribute to the K(+) site. Residue Thr-249 coordinates Mg(2+). Position 443 (Lys-443) interacts with (6S)-5-formyl-5,6,7,8-tetrahydrofolate.

Belongs to the TRAFAC class TrmE-Era-EngA-EngB-Septin-like GTPase superfamily. TrmE GTPase family. In terms of assembly, homodimer. Heterotetramer of two MnmE and two MnmG subunits. K(+) serves as cofactor.

It is found in the cytoplasm. Functionally, exhibits a very high intrinsic GTPase hydrolysis rate. Involved in the addition of a carboxymethylaminomethyl (cmnm) group at the wobble position (U34) of certain tRNAs, forming tRNA-cmnm(5)s(2)U34. The chain is tRNA modification GTPase MnmE from Pelagibacter ubique (strain HTCC1062).